The primary structure comprises 92 residues: Small ribosomal subunit protein uS19c (92 aa).

The protein belongs to the universal ribosomal protein uS19 family.

It localises to the plastid. The protein resides in the chloroplast. In terms of biological role, protein S19 forms a complex with S13 that binds strongly to the 16S ribosomal RNA. This is Small ribosomal subunit protein uS19c (rps19) from Anthoceros angustus (Hornwort).